The chain runs to 395 residues: Elongation factor Tu (395 aa).

One can recognise a tr-type G domain in the interval 6–205 (KPHINVGTIG…NALEKISLPT (200 aa)). The tract at residues 15-22 (GHVDHGKT) is G1. 15–22 (GHVDHGKT) contributes to the GTP binding site. T22 is a binding site for Mg(2+). The tract at residues 59–63 (GITIS) is G2. Positions 80-83 (DCPG) are G3. GTP is bound by residues 80–84 (DCPGH) and 135–138 (NKCD). The G4 stretch occupies residues 135-138 (NKCD). A G5 region spans residues 173–175 (SAV).

This sequence belongs to the TRAFAC class translation factor GTPase superfamily. Classic translation factor GTPase family. EF-Tu/EF-1A subfamily. Monomer.

The protein localises to the cytoplasm. The enzyme catalyses GTP + H2O = GDP + phosphate + H(+). Its function is as follows. GTP hydrolase that promotes the GTP-dependent binding of aminoacyl-tRNA to the A-site of ribosomes during protein biosynthesis. This Ehrlichia chaffeensis (strain ATCC CRL-10679 / Arkansas) protein is Elongation factor Tu.